Reading from the N-terminus, the 152-residue chain is Cytochrome c-type biogenesis protein CcmE (152 aa).

The Cytoplasmic portion of the chain corresponds to 1–8; the sequence is MQARRKTR. A helical; Signal-anchor for type II membrane protein transmembrane segment spans residues 9-29; the sequence is LYIVLAVLAGLGLTVSLTLYA. The Periplasmic segment spans residues 30–152; that stretch reads LSSNIDLFYT…MTPEKTGAQP (123 aa). Residues H130 and Y134 each contribute to the heme site. Residues 133-152 form a disordered region; that stretch reads NYTPPEVKNAMTPEKTGAQP.

It belongs to the CcmE/CycJ family.

It localises to the cell inner membrane. Functionally, heme chaperone required for the biogenesis of c-type cytochromes. Transiently binds heme delivered by CcmC and transfers the heme to apo-cytochromes in a process facilitated by CcmF and CcmH. This chain is Cytochrome c-type biogenesis protein CcmE, found in Klebsiella pneumoniae (strain 342).